The sequence spans 729 residues: Fatty acid oxidation complex subunit alpha (729 aa).

Positions 1–189 (MLYKGDTLYL…KIGLVDGVVK (189 aa)) are enoyl-CoA hydratase/isomerase. Asp-296 lines the substrate pocket. Positions 311–729 (ETPKQAAVLG…ARPVGSLKTA (419 aa)) are 3-hydroxyacyl-CoA dehydrogenase. Residues Met-324, Asp-343, 400 to 402 (VVE), Lys-407, and Ser-429 contribute to the NAD(+) site. The For 3-hydroxyacyl-CoA dehydrogenase activity role is filled by His-450. Asn-453 is a binding site for NAD(+). Substrate is bound by residues Asn-500 and Tyr-660. Residues 708–729 (RHNEPYYPPVEPARPVGSLKTA) form a disordered region.

The protein in the N-terminal section; belongs to the enoyl-CoA hydratase/isomerase family. It in the C-terminal section; belongs to the 3-hydroxyacyl-CoA dehydrogenase family. Heterotetramer of two alpha chains (FadB) and two beta chains (FadA).

It carries out the reaction a (3S)-3-hydroxyacyl-CoA + NAD(+) = a 3-oxoacyl-CoA + NADH + H(+). It catalyses the reaction a (3S)-3-hydroxyacyl-CoA = a (2E)-enoyl-CoA + H2O. The enzyme catalyses a 4-saturated-(3S)-3-hydroxyacyl-CoA = a (3E)-enoyl-CoA + H2O. The catalysed reaction is (3S)-3-hydroxybutanoyl-CoA = (3R)-3-hydroxybutanoyl-CoA. It carries out the reaction a (3Z)-enoyl-CoA = a 4-saturated (2E)-enoyl-CoA. It catalyses the reaction a (3E)-enoyl-CoA = a 4-saturated (2E)-enoyl-CoA. It functions in the pathway lipid metabolism; fatty acid beta-oxidation. In terms of biological role, involved in the aerobic and anaerobic degradation of long-chain fatty acids via beta-oxidation cycle. Catalyzes the formation of 3-oxoacyl-CoA from enoyl-CoA via L-3-hydroxyacyl-CoA. It can also use D-3-hydroxyacyl-CoA and cis-3-enoyl-CoA as substrate. The sequence is that of Fatty acid oxidation complex subunit alpha from Salmonella enteritidis PT4 (strain P125109).